Reading from the N-terminus, the 825-residue chain is Zinc finger protein 229 (825 aa).

Residues 1–26 (METLTSRHEKRALHSQASAISQDREE) form a disordered region. A KRAB domain is found at 34 to 108 (LSFKDVAVVF…SHKELSSCKI (75 aa)). The C2H2-type 1; degenerate zinc-finger motif lies at 291 to 315 (KLCQYDEFSEGLRHSAHLNRHQRVP). 7 C2H2-type zinc fingers span residues 349–371 (YRCD…QGVH), 377–399 (YKCE…QRVH), 405–427 (YKCS…QRLH), 433–455 (YTCS…QHIH), 461–483 (YSCG…QKTH), 489–511 (YQCD…QRVH), and 517–539 (YKCN…QRLH). K543 is covalently cross-linked (Glycyl lysine isopeptide (Lys-Gly) (interchain with G-Cter in SUMO2)). C2H2-type zinc fingers lie at residues 545–566 (YKCE…QRVH), 572–594 (YKCS…QRVH), 600–622 (YVCD…QRVH), 628–650 (YKCA…QRVH), 656–678 (YRCQ…QRVH), 684–706 (YTCD…QRLH), 712–734 (YTCC…KRVH), 740–762 (YRCH…QRVH), 768–790 (YKCE…QRVH), and 796–818 (YTCG…QRVH).

It belongs to the krueppel C2H2-type zinc-finger protein family.

The protein localises to the nucleus. Its function is as follows. May be involved in transcriptional regulation. This Homo sapiens (Human) protein is Zinc finger protein 229.